A 269-amino-acid polypeptide reads, in one-letter code: Shikimate dehydrogenase (NADP(+)) (269 aa).

Residues 14-16 and Thr60 contribute to the shikimate site; that span reads TLS. Lys64 functions as the Proton acceptor in the catalytic mechanism. Position 76 (Asp76) interacts with NADP(+). Residues Asn85 and Asp100 each coordinate shikimate. NADP(+) contacts are provided by residues 122-126 and Met208; that span reads GAGGA. Tyr210 lines the shikimate pocket. Position 232 (Gly232) interacts with NADP(+).

This sequence belongs to the shikimate dehydrogenase family. In terms of assembly, homodimer.

The enzyme catalyses shikimate + NADP(+) = 3-dehydroshikimate + NADPH + H(+). It participates in metabolic intermediate biosynthesis; chorismate biosynthesis; chorismate from D-erythrose 4-phosphate and phosphoenolpyruvate: step 4/7. Functionally, involved in the biosynthesis of the chorismate, which leads to the biosynthesis of aromatic amino acids. Catalyzes the reversible NADPH linked reduction of 3-dehydroshikimate (DHSA) to yield shikimate (SA). In Caldivirga maquilingensis (strain ATCC 700844 / DSM 13496 / JCM 10307 / IC-167), this protein is Shikimate dehydrogenase (NADP(+)).